We begin with the raw amino-acid sequence, 426 residues long: Glutamate-1-semialdehyde 2,1-aminomutase (426 aa).

Position 267 is an N6-(pyridoxal phosphate)lysine (lysine 267).

Belongs to the class-III pyridoxal-phosphate-dependent aminotransferase family. HemL subfamily. As to quaternary structure, homodimer. Requires pyridoxal 5'-phosphate as cofactor.

The protein resides in the cytoplasm. It catalyses the reaction (S)-4-amino-5-oxopentanoate = 5-aminolevulinate. It participates in porphyrin-containing compound metabolism; protoporphyrin-IX biosynthesis; 5-aminolevulinate from L-glutamyl-tRNA(Glu): step 2/2. In Bdellovibrio bacteriovorus (strain ATCC 15356 / DSM 50701 / NCIMB 9529 / HD100), this protein is Glutamate-1-semialdehyde 2,1-aminomutase.